We begin with the raw amino-acid sequence, 254 residues long: MLLNRFLVPLRSLQKLTQARRWHQTSLINDLVVNMDKKAMWDRFYTENGSKGQFKNFEWFFGFPSVKDLVLPALQAMSCSHSGPLHILDMGCGTSALGPCIYSTSPCAVRVTCADISPVAVKLMEEHTKSTSTQPCNPSSALVFLELDCTQMTGHFKSRSLDLILDKGTTDALVRSKEGQVKAGQILRQSLQVLRPSGSFLQFSDEDPDARLIWLEREVQGAEVTADVGVQEIGELRGVSYFCYQISPRSRPHS.

A mitochondrion-targeting transit peptide spans 1–45 (MLLNRFLVPLRSLQKLTQARRWHQTSLINDLVVNMDKKAMWDRFY).

This sequence belongs to the methyltransferase superfamily.

Its subcellular location is the mitochondrion. The enzyme catalyses L-lysyl-[citrate synthase] + S-adenosyl-L-methionine = N(6)-methyl-L-lysyl-[citrate synthase] + S-adenosyl-L-homocysteine + H(+). The catalysed reaction is N(6)-methyl-L-lysyl-[citrate synthase] + S-adenosyl-L-methionine = N(6),N(6)-dimethyl-L-lysyl-[citrate synthase] + S-adenosyl-L-homocysteine + H(+). It catalyses the reaction N(6),N(6)-dimethyl-L-lysyl-[citrate synthase] + S-adenosyl-L-methionine = N(6),N(6),N(6)-trimethyl-L-lysyl-[citrate synthase] + S-adenosyl-L-homocysteine + H(+). With respect to regulation, citrate synthase-lysine methyltransferase activity is inhibited by S-adenosylhomocysteine (AdoHcy) and oxaloacetate (OAA). In terms of biological role, protein-lysine methyltransferase that selectively trimethylates citrate synthase (CS) in mitochondria. Seems to conduct trimethylation in a highly distributive manner rather than in a processive manner, and thus introduces a single methyl group per binding event. The chain is Citrate synthase-lysine N-methyltransferase CSKMT, mitochondrial from Danio rerio (Zebrafish).